Reading from the N-terminus, the 100-residue chain is Urease subunit gamma (100 aa).

It belongs to the urease gamma subunit family. In terms of assembly, heterotrimer of UreA (gamma), UreB (beta) and UreC (alpha) subunits. Three heterotrimers associate to form the active enzyme.

The protein localises to the cytoplasm. The catalysed reaction is urea + 2 H2O + H(+) = hydrogencarbonate + 2 NH4(+). It functions in the pathway nitrogen metabolism; urea degradation; CO(2) and NH(3) from urea (urease route): step 1/1. This Saccharophagus degradans (strain 2-40 / ATCC 43961 / DSM 17024) protein is Urease subunit gamma.